The primary structure comprises 898 residues: Serine/threonine-protein kinase TAO3 (898 aa).

The Protein kinase domain maps to 24 to 277 (FIGLHEIGHG…SAELLRHDFV (254 aa)). Residues 30 to 38 (IGHGSFGAV) and Lys53 contribute to the ATP site. Residue Asp147 is the Proton acceptor of the active site. 2 disordered regions span residues 316 to 362 (TRNG…SQSS) and 405 to 425 (DEAG…VQSQ). Ser324 is modified (phosphoserine; by ATM). A phosphoserine mark is found at Ser331, Ser343, Ser346, and Ser349. Residues 334-351 (GTSLNREMDSLGSNHSIP) show a composition bias toward polar residues. Low complexity predominate over residues 352–362 (SMSVSTGSQSS). Position 357 is a phosphothreonine (Thr357). Phosphoserine is present on Ser359. A compositionally biased stretch (basic and acidic residues) spans 405–416 (DEAGHGDPRPEP). Ser442 bears the Phosphoserine mark. 3 coiled-coil regions span residues 452–502 (EQEN…THAN), 548–649 (FLES…HAML), and 754–879 (LKTL…DMES). The tract at residues 565 to 596 (EEMNEDHSTPKKEKQERISKHKENLQHTQAEE) is disordered. Lys830 carries the post-translational modification N6-acetyllysine.

This sequence belongs to the protein kinase superfamily. STE Ser/Thr protein kinase family. STE20 subfamily. As to quaternary structure, self-associates. Interacts with ERN1 and TRAF2. Interaction with TRAF2 is facilitated under ER stress conditions, such as treatment with tunicamycin, and may promote TRAF2 phosphorylation. Interacts (via N-terminus) with STK25; the interaction promotes STK25 abundance at the level of protein expression and/or stability. Post-translationally, autophosphorylated. Phosphorylation at Ser-324 by ATM following DNA damage is required for activation of the p38/MAPK14 stress-activated MAPK cascade. Phosphorylated at Ser-324 and on Tyr residues during T cell activation. Phosphorylated by LRRK2.

It is found in the cytoplasm. The protein localises to the cell membrane. The protein resides in the membrane raft. Its subcellular location is the lipid droplet. The enzyme catalyses L-seryl-[protein] + ATP = O-phospho-L-seryl-[protein] + ADP + H(+). The catalysed reaction is L-threonyl-[protein] + ATP = O-phospho-L-threonyl-[protein] + ADP + H(+). Serine/threonine-protein kinase that acts as a regulator of the p38/MAPK14 stress-activated MAPK cascade and of the MAPK8/JNK cascade. In response to DNA damage, involved in the G2/M transition DNA damage checkpoint by activating the p38/MAPK14 stress-activated MAPK cascade, probably by mediating phosphorylation of upstream MAP2K3 and MAP2K6 kinases. Inhibits basal activity of the MAPK8/JNK cascade and diminishes its activation in response to epidermal growth factor (EGF). Positively regulates canonical T cell receptor (TCR) signaling by preventing early PTPN6/SHP1-mediated inactivation of LCK, ensuring sustained TCR signaling that is required for optimal activation and differentiation of T cells. Phosphorylates PTPN6/SHP1 on 'Thr-394', leading to its polyubiquitination and subsequent proteasomal degradation. Required for cell surface expression of metalloprotease ADAM10 on type 1 transitional B cells which is necessary for their NOTCH-mediated development into marginal zone B cells. Also required for the NOTCH-mediated terminal differentiation of splenic conventional type 2 dendritic cells. Positively regulates osteoblast differentiation by acting as an upstream activator of the JNK pathway. Promotes JNK signaling in hepatocytes and positively regulates hepatocyte lipid storage by inhibiting beta-oxidation and triacylglycerol secretion while enhancing lipid synthesis. Restricts age-associated inflammation by negatively regulating differentiation of macrophages and their production of pro-inflammatory cytokines. Plays a role in negatively regulating the abundance of regulatory T cells in white adipose tissue. In Pongo abelii (Sumatran orangutan), this protein is Serine/threonine-protein kinase TAO3 (TAOK3).